We begin with the raw amino-acid sequence, 224 residues long: MQNQVESLSLMPREKLLRFGAPALTDEELLAIFLRTGIKGCSVMQLSRHVLQHFHSLRGLMSATQTEFCQLKGLGITQFIQLQACTEMSKRYLQEELKLTQAFKNSENVRFYLQATLENKEREIFQVLFLDNQHRLIKQEEMFLGTINCTTIHPREIIKSALFCNAAALILAHNHPSGNPEPSASDKMVTTKIQAAAELVEIRILDHFVIGKGCYYSFAENRLL.

Residues A102–L224 form the MPN domain. Residues H173, H175, and D186 each contribute to the Zn(2+) site. The JAMM motif signature appears at H173 to D186.

This sequence belongs to the UPF0758 family.

This chain is UPF0758 protein PM1152, found in Pasteurella multocida (strain Pm70).